The chain runs to 165 residues: 2-C-methyl-D-erythritol 2,4-cyclodiphosphate synthase (165 aa).

Positions 8 and 10 each coordinate a divalent metal cation. 4-CDP-2-C-methyl-D-erythritol 2-phosphate contacts are provided by residues 8 to 10 and 34 to 35; these read DVH and HS. His-42 is an a divalent metal cation binding site. 4-CDP-2-C-methyl-D-erythritol 2-phosphate is bound by residues 56–58, 61–65, 100–106, 132–135, Phe-139, and Arg-142; these read DIG, FPDTD, AQAPKMA, and TTTE.

It belongs to the IspF family. As to quaternary structure, homotrimer. Requires a divalent metal cation as cofactor.

The enzyme catalyses 4-CDP-2-C-methyl-D-erythritol 2-phosphate = 2-C-methyl-D-erythritol 2,4-cyclic diphosphate + CMP. It participates in isoprenoid biosynthesis; isopentenyl diphosphate biosynthesis via DXP pathway; isopentenyl diphosphate from 1-deoxy-D-xylulose 5-phosphate: step 4/6. In terms of biological role, involved in the biosynthesis of isopentenyl diphosphate (IPP) and dimethylallyl diphosphate (DMAPP), two major building blocks of isoprenoid compounds. Catalyzes the conversion of 4-diphosphocytidyl-2-C-methyl-D-erythritol 2-phosphate (CDP-ME2P) to 2-C-methyl-D-erythritol 2,4-cyclodiphosphate (ME-CPP) with a corresponding release of cytidine 5-monophosphate (CMP). The sequence is that of 2-C-methyl-D-erythritol 2,4-cyclodiphosphate synthase from Pectobacterium atrosepticum (strain SCRI 1043 / ATCC BAA-672) (Erwinia carotovora subsp. atroseptica).